The chain runs to 280 residues: Probable formate transporter (280 aa).

6 consecutive transmembrane segments (helical) span residues 33-49 (LSFV…LLAE), 67-83 (LVFG…VVIA), 116-133 (SWVF…VLAY), 177-195 (FWRA…YLAV), 204-219 (SFGI…CIGF), and 253-272 (LGNI…FTYL).

The protein belongs to the FNT transporter (TC 1.A.16) family.

The protein localises to the cell membrane. Functionally, may act as a formate transporter. The polypeptide is Probable formate transporter (fdhC) (Methanobacterium formicicum).